Consider the following 708-residue polypeptide: ARF GTPase-activating protein GIT2 (708 aa).

The region spanning 1–124 is the Arf-GAP domain; it reads MSKRLRSSDV…AFVHRLPCRE (124 aa). The C4-type zinc finger occupies 11 to 34; sequence CADCNGPDPSWASVNRGTFICDEC. 3 ANK repeats span residues 132-161, 166-195, and 199-228; these read DLSK…QANF, KGST…DPGT, and SGKT…ELTD. The tract at residues 376–592 is disordered; sequence STQHSTESQD…SPTLPSTEDV (217 aa). The segment covering 384–401 has biased composition (acidic residues); sequence QDNDQPDYDSVASDEDTD. 2 positions are modified to phosphoserine: Ser393 and Ser396. Thr400 carries the post-translational modification Phosphothreonine. Polar residues predominate over residues 407–438; sequence SKANRQKLQTLQSENSSLRRQATASACQVQTG. Positions 504-518 are enriched in low complexity; that stretch reads TSSSSLPSFPSTLSW. A phosphoserine mark is found at Ser508, Ser511, and Ser519. The segment covering 519–532 has biased composition (basic and acidic residues); sequence SRDESARRASRLEK. Position 536 is a phosphothreonine (Thr536). Ser563 is modified (phosphoserine).

May form heterooligomers with GIT1. Directly interacts with protein Piccolo/PCLO. Interacts with PPFIA1 and PPFIA2. Interacts with ARHGEF7. Identified in a complex with ARHGEF6 and BIN2. Interacts with PAK3. Interacts with PXN/paxillin. Interacts with TGFB1I1. Forms a complex with EFNB1 and GRB4/NCK2. In terms of processing, tyrosine phosphorylated when coexpressed in cells with PTK2/FAK1 and SRC. As to expression, expressed in the brain (at protein level).

In terms of biological role, GTPase-activating protein for ADP ribosylation factor family members, including ARF1. The chain is ARF GTPase-activating protein GIT2 (Git2) from Mus musculus (Mouse).